A 96-amino-acid polypeptide reads, in one-letter code: MDGFGSDFSVGGSSSGKVDTGAIMEQVKVQIAVANAQELLQRMTDKCFRKCIGKPGGSLDNSEQKCVAMCMDRYMDAWNIVSRAYNSRLQRERAKM.

The Twin CX3C motif signature appears at 47-70; it reads CFRKCIGKPGGSLDNSEQKCVAMC. 2 disulfides stabilise this stretch: Cys47/Cys70 and Cys51/Cys66.

Belongs to the small Tim family. In terms of assembly, heterohexamer; composed of 3 copies of TIMM8 (TIMM8A or TIMM8B) and 3 copies of TIMM13, named soluble 70 kDa complex. Associates with the TIM22 complex, whose core is composed of TIMM22.

It localises to the mitochondrion inner membrane. Mitochondrial intermembrane chaperone that participates in the import and insertion of some multi-pass transmembrane proteins into the mitochondrial inner membrane. Also required for the transfer of beta-barrel precursors from the TOM complex to the sorting and assembly machinery (SAM complex) of the outer membrane. Acts as a chaperone-like protein that protects the hydrophobic precursors from aggregation and guide them through the mitochondrial intermembrane space. The TIMM8-TIMM13 complex mediates the import of some proteins while the predominant TIMM9-TIMM10 70 kDa complex mediates the import of much more proteins. The chain is Mitochondrial import inner membrane translocase subunit Tim13-B (timm13-b) from Xenopus laevis (African clawed frog).